Here is a 214-residue protein sequence, read N- to C-terminus: Cell division protein DamX (214 aa).

Composition is skewed to polar residues over residues 1-14 and 43-53; these read GSGT…QPQQ and QGMTGAASTLP. The segment at 1-133 is disordered; it reads GSGTPTEAQT…SVQSAPGSHY (133 aa). Residues 44 to 65 traverse the membrane as a helical segment; the sequence is GMTGAASTLPTAPATVMSGAAA. Low complexity-rich tracts occupy residues 78–97 and 110–131; these read QQHK…TQHK and SSTA…APGS. The 78-residue stretch at 127–204 folds into the SPOR domain; that stretch reads SAPGSHYTLQ…VQAKKPWVRP (78 aa).

It belongs to the DamX family.

It localises to the cell inner membrane. Non-essential cell division protein. This Serratia marcescens protein is Cell division protein DamX.